A 266-amino-acid polypeptide reads, in one-letter code: Thymidylate synthase (266 aa).

A dUMP-binding site is contributed by Arg24. His54 provides a ligand contact to (6R)-5,10-methylene-5,6,7,8-tetrahydrofolate. 129-130 serves as a coordination point for dUMP; the sequence is RR. Cys149 (nucleophile) is an active-site residue. DUMP contacts are provided by residues 169–172, Asn180, and 210–212; these read RSAD and HIY. A (6R)-5,10-methylene-5,6,7,8-tetrahydrofolate-binding site is contributed by Asp172. A (6R)-5,10-methylene-5,6,7,8-tetrahydrofolate-binding site is contributed by Ala265.

Belongs to the thymidylate synthase family. Bacterial-type ThyA subfamily. Homodimer.

It localises to the cytoplasm. It catalyses the reaction dUMP + (6R)-5,10-methylene-5,6,7,8-tetrahydrofolate = 7,8-dihydrofolate + dTMP. It functions in the pathway pyrimidine metabolism; dTTP biosynthesis. Its function is as follows. Catalyzes the reductive methylation of 2'-deoxyuridine-5'-monophosphate (dUMP) to 2'-deoxythymidine-5'-monophosphate (dTMP) while utilizing 5,10-methylenetetrahydrofolate (mTHF) as the methyl donor and reductant in the reaction, yielding dihydrofolate (DHF) as a by-product. This enzymatic reaction provides an intracellular de novo source of dTMP, an essential precursor for DNA biosynthesis. This Mycobacterium ulcerans (strain Agy99) protein is Thymidylate synthase.